The sequence spans 384 residues: S-adenosylmethionine synthase (384 aa).

His-15 provides a ligand contact to ATP. Residue Asp-17 coordinates Mg(2+). Glu-43 provides a ligand contact to K(+). L-methionine contacts are provided by Glu-56 and Gln-99. The tract at residues 99–109 is flexible loop; that stretch reads QSPDINQGVDR. ATP contacts are provided by residues 164–166, 230–231, Asp-239, 245–246, Ala-262, and Lys-266; these read DAK, RF, and RK. L-methionine is bound at residue Asp-239. Lys-270 contacts L-methionine.

Belongs to the AdoMet synthase family. As to quaternary structure, homotetramer; dimer of dimers. Mg(2+) serves as cofactor. It depends on K(+) as a cofactor.

The protein resides in the cytoplasm. The catalysed reaction is L-methionine + ATP + H2O = S-adenosyl-L-methionine + phosphate + diphosphate. It participates in amino-acid biosynthesis; S-adenosyl-L-methionine biosynthesis; S-adenosyl-L-methionine from L-methionine: step 1/1. Functionally, catalyzes the formation of S-adenosylmethionine (AdoMet) from methionine and ATP. The overall synthetic reaction is composed of two sequential steps, AdoMet formation and the subsequent tripolyphosphate hydrolysis which occurs prior to release of AdoMet from the enzyme. The sequence is that of S-adenosylmethionine synthase from Serratia proteamaculans (strain 568).